The primary structure comprises 116 residues: Ribosome-binding factor A (116 aa).

The protein belongs to the RbfA family. Monomer. Binds 30S ribosomal subunits, but not 50S ribosomal subunits or 70S ribosomes.

The protein localises to the cytoplasm. Functionally, one of several proteins that assist in the late maturation steps of the functional core of the 30S ribosomal subunit. Associates with free 30S ribosomal subunits (but not with 30S subunits that are part of 70S ribosomes or polysomes). Required for efficient processing of 16S rRNA. May interact with the 5'-terminal helix region of 16S rRNA. This is Ribosome-binding factor A from Streptococcus pneumoniae (strain ATCC 700669 / Spain 23F-1).